Reading from the N-terminus, the 269-residue chain is Protein RKD1 (269 aa).

In terms of domain architecture, RWP-RK spans 106-195 (TTTTKKRRCR…EKMEGEENED (90 aa)). The stretch at 175–216 (LQKLISNVKELEKMEGEENEDKLRNALEKLEKEKKTIEKLPD) forms a coiled coil. The interval 230–269 (CFKANHKRKRRSGMSTPITSSSSSASASSSSYSSVSGFER) is disordered. Low complexity predominate over residues 249 to 269 (SSSSSASASSSSYSSVSGFER).

The protein resides in the nucleus. Functionally, putative transcription factor. This is Protein RKD1 (RKD1) from Arabidopsis thaliana (Mouse-ear cress).